A 92-amino-acid polypeptide reads, in one-letter code: Small ribosomal subunit protein uS17 (92 aa).

This sequence belongs to the universal ribosomal protein uS17 family. As to quaternary structure, part of the 30S ribosomal subunit.

One of the primary rRNA binding proteins, it binds specifically to the 5'-end of 16S ribosomal RNA. The protein is Small ribosomal subunit protein uS17 of Cupriavidus necator (strain ATCC 17699 / DSM 428 / KCTC 22496 / NCIMB 10442 / H16 / Stanier 337) (Ralstonia eutropha).